A 181-amino-acid chain; its full sequence is Small ribosomal subunit protein cS23 (181 aa).

A disordered region spans residues 1–40 (MLPMSVHPATTPALASRPRVSLPRPSTPSSSSSLVHLKSR). Residues 14-36 (LASRPRVSLPRPSTPSSSSSLVH) are compositionally biased toward low complexity.

The protein belongs to the chloroplast-specific ribosomal protein cS23 family. Part of the 30S ribosomal subunit.

Its subcellular location is the plastid. The protein localises to the chloroplast. Component of the chloroplast ribosome (chloro-ribosome), a dedicated translation machinery responsible for the synthesis of chloroplast genome-encoded proteins, including proteins of the transcription and translation machinery and components of the photosynthetic apparatus. This Hordeum vulgare (Barley) protein is Small ribosomal subunit protein cS23 (PSRP3).